Reading from the N-terminus, the 486-residue chain is Meiosis-specific nuclear structural protein 1 (486 aa).

Coiled coils occupy residues 52 to 198 (QIEE…KEKH) and 230 to 440 (EDFK…KQHA).

This sequence belongs to the MNS1 family.

It is found in the nucleus. It localises to the cytoplasm. Its subcellular location is the cytoskeleton. The protein resides in the cilium axoneme. The protein localises to the flagellum axoneme. In terms of biological role, microtubule inner protein (MIP) part of the dynein-decorated doublet microtubules (DMTs) in cilia axoneme, which is required for motile cilia beating. May play a role in the control of meiotic division and germ cell differentiation through regulation of pairing and recombination during meiosis. Required for sperm flagella assembly. May play a role in the assembly and function of the outer dynein arm-docking complex (ODA-DC). ODA-DC mediates outer dynein arms (ODA) binding onto the axonemal doublet microtubules. The polypeptide is Meiosis-specific nuclear structural protein 1 (mns1) (Danio rerio (Zebrafish)).